The chain runs to 396 residues: 1-deoxy-D-xylulose 5-phosphate reductoisomerase (396 aa).

5 residues coordinate NADPH: threonine 13, glycine 14, serine 15, isoleucine 16, and asparagine 127. Lysine 128 lines the 1-deoxy-D-xylulose 5-phosphate pocket. Glutamate 129 serves as a coordination point for NADPH. A Mn(2+)-binding site is contributed by aspartate 153. The 1-deoxy-D-xylulose 5-phosphate site is built by serine 154, glutamate 155, serine 184, and histidine 207. Glutamate 155 is a binding site for Mn(2+). Position 213 (glycine 213) interacts with NADPH. Positions 220, 225, 226, and 229 each coordinate 1-deoxy-D-xylulose 5-phosphate. Glutamate 229 serves as a coordination point for Mn(2+).

It belongs to the DXR family. Mg(2+) serves as cofactor. The cofactor is Mn(2+).

The catalysed reaction is 2-C-methyl-D-erythritol 4-phosphate + NADP(+) = 1-deoxy-D-xylulose 5-phosphate + NADPH + H(+). Its pathway is isoprenoid biosynthesis; isopentenyl diphosphate biosynthesis via DXP pathway; isopentenyl diphosphate from 1-deoxy-D-xylulose 5-phosphate: step 1/6. Functionally, catalyzes the NADPH-dependent rearrangement and reduction of 1-deoxy-D-xylulose-5-phosphate (DXP) to 2-C-methyl-D-erythritol 4-phosphate (MEP). In Pseudomonas fluorescens (strain ATCC BAA-477 / NRRL B-23932 / Pf-5), this protein is 1-deoxy-D-xylulose 5-phosphate reductoisomerase.